A 579-amino-acid polypeptide reads, in one-letter code: Arginine--tRNA ligase (579 aa).

Residues 127 to 137 (ANPTGPLHVGH) carry the 'HIGH' region motif.

Belongs to the class-I aminoacyl-tRNA synthetase family. In terms of assembly, monomer.

It is found in the cytoplasm. The enzyme catalyses tRNA(Arg) + L-arginine + ATP = L-arginyl-tRNA(Arg) + AMP + diphosphate. The chain is Arginine--tRNA ligase from Acidithiobacillus ferrooxidans (strain ATCC 23270 / DSM 14882 / CIP 104768 / NCIMB 8455) (Ferrobacillus ferrooxidans (strain ATCC 23270)).